A 455-amino-acid chain; its full sequence is Adenylyltransferase and sulfurtransferase MOCS3 (455 aa).

ATP-binding positions include Gly90, Asp111, 118 to 122 (SNLAR), Lys135, and 179 to 180 (DN). An interaction with NFS1 region spans residues 156–236 (AQALTPATAL…RPPPAETVTS (81 aa)). Zn(2+) contacts are provided by Cys220 and Cys223. Cys237 serves as the catalytic Glycyl thioester intermediate; for adenylyltransferase activity. Residues Cys295 and Cys298 each coordinate Zn(2+). Cys314 and Cys322 form a disulfide bridge. In terms of domain architecture, Rhodanese spans 345 to 453 (SRSPHLLLDV…WAAKIDGTFP (109 aa)). Cys410 (cysteine persulfide intermediate; for sulfurtransferase activity) is an active-site residue. Residue Cys410 is modified to Cysteine persulfide.

The protein in the N-terminal section; belongs to the HesA/MoeB/ThiF family. UBA4 subfamily. Interacts with NFS1. Zn(2+) is required as a cofactor.

The protein localises to the cytoplasm. It localises to the cytosol. The enzyme catalyses [molybdopterin-synthase sulfur-carrier protein]-C-terminal Gly-Gly + ATP + H(+) = [molybdopterin-synthase sulfur-carrier protein]-C-terminal Gly-Gly-AMP + diphosphate. It catalyses the reaction [molybdopterin-synthase sulfur-carrier protein]-C-terminal Gly-Gly-AMP + S-sulfanyl-L-cysteinyl-[cysteine desulfurase] + AH2 = [molybdopterin-synthase sulfur-carrier protein]-C-terminal-Gly-aminoethanethioate + L-cysteinyl-[cysteine desulfurase] + A + AMP + 2 H(+). The protein operates within tRNA modification; 5-methoxycarbonylmethyl-2-thiouridine-tRNA biosynthesis. Its pathway is cofactor biosynthesis; molybdopterin biosynthesis. In terms of biological role, plays a central role in 2-thiolation of mcm(5)S(2)U at tRNA wobble positions of cytosolic tRNA(Lys), tRNA(Glu) and tRNA(Gln). Also essential during biosynthesis of the molybdenum cofactor. Acts by mediating the C-terminal thiocarboxylation of sulfur carriers URM1 and MOCS2A. Its N-terminus first activates URM1 and MOCS2A as acyl-adenylates (-COAMP), then the persulfide sulfur on the catalytic cysteine is transferred to URM1 and MOCS2A to form thiocarboxylation (-COSH) of their C-terminus. The reaction probably involves hydrogen sulfide that is generated from the persulfide intermediate and that acts as a nucleophile towards URM1 and MOCS2A. Subsequently, a transient disulfide bond is formed. Does not use thiosulfate as sulfur donor; NFS1 acting as a sulfur donor for thiocarboxylation reactions. This Bos taurus (Bovine) protein is Adenylyltransferase and sulfurtransferase MOCS3.